Here is an 819-residue protein sequence, read N- to C-terminus: Probable beta-glucosidase G (819 aa).

An N-terminal signal peptide occupies residues 1–20 (MTSASQILVWGLLAASGAQA). Asn41, Asn59, Asn107, Asn228, and Asn277 each carry an N-linked (GlcNAc...) asparagine glycan. The active site involves Asp305. Residues Asn337, Asn344, Asn351, Asn403, Asn500, Asn509, Asn554, Asn567, Asn588, Asn627, Asn683, and Asn719 are each glycosylated (N-linked (GlcNAc...) asparagine).

It belongs to the glycosyl hydrolase 3 family.

The protein resides in the secreted. The enzyme catalyses Hydrolysis of terminal, non-reducing beta-D-glucosyl residues with release of beta-D-glucose.. It functions in the pathway glycan metabolism; cellulose degradation. In terms of biological role, beta-glucosidases are one of a number of cellulolytic enzymes involved in the degradation of cellulosic biomass. Catalyzes the last step releasing glucose from the inhibitory cellobiose. The sequence is that of Probable beta-glucosidase G (bglG) from Emericella nidulans (strain FGSC A4 / ATCC 38163 / CBS 112.46 / NRRL 194 / M139) (Aspergillus nidulans).